We begin with the raw amino-acid sequence, 338 residues long: Nicotinate-nucleotide--dimethylbenzimidazole phosphoribosyltransferase (338 aa).

The active-site Proton acceptor is the Glu305.

Belongs to the CobT family.

The catalysed reaction is 5,6-dimethylbenzimidazole + nicotinate beta-D-ribonucleotide = alpha-ribazole 5'-phosphate + nicotinate + H(+). Its pathway is nucleoside biosynthesis; alpha-ribazole biosynthesis; alpha-ribazole from 5,6-dimethylbenzimidazole: step 1/2. Catalyzes the synthesis of alpha-ribazole-5'-phosphate from nicotinate mononucleotide (NAMN) and 5,6-dimethylbenzimidazole (DMB). The chain is Nicotinate-nucleotide--dimethylbenzimidazole phosphoribosyltransferase from Rhizobium etli (strain ATCC 51251 / DSM 11541 / JCM 21823 / NBRC 15573 / CFN 42).